Consider the following 210-residue polypeptide: Pyridoxine/pyridoxamine 5'-phosphate oxidase (210 aa).

Substrate-binding positions include 7 to 10 and Lys65; that span reads RQSY. Residues 60-65, 75-76, Arg81, Lys82, and Gln104 each bind FMN; these read RIVLIK and FT. Substrate is bound by residues Tyr122, Arg126, and Ser130. FMN contacts are provided by residues 139–140 and Trp182; that span reads QS. 188–190 contacts substrate; sequence RLH. Residue Arg192 coordinates FMN.

It belongs to the pyridoxamine 5'-phosphate oxidase family. As to quaternary structure, homodimer. Requires FMN as cofactor.

It catalyses the reaction pyridoxamine 5'-phosphate + O2 + H2O = pyridoxal 5'-phosphate + H2O2 + NH4(+). The enzyme catalyses pyridoxine 5'-phosphate + O2 = pyridoxal 5'-phosphate + H2O2. It participates in cofactor metabolism; pyridoxal 5'-phosphate salvage; pyridoxal 5'-phosphate from pyridoxamine 5'-phosphate: step 1/1. It functions in the pathway cofactor metabolism; pyridoxal 5'-phosphate salvage; pyridoxal 5'-phosphate from pyridoxine 5'-phosphate: step 1/1. Functionally, catalyzes the oxidation of either pyridoxine 5'-phosphate (PNP) or pyridoxamine 5'-phosphate (PMP) into pyridoxal 5'-phosphate (PLP). This Bordetella avium (strain 197N) protein is Pyridoxine/pyridoxamine 5'-phosphate oxidase.